The chain runs to 252 residues: MKLISWNVNGLRAVMRKMDFLSYLKEEDADIICLQETKIQDGQVDLQPEDYHVYWNYAVKKGYSGTAVFSKQEPLQVIYGIGVEEHDQEGRVITLEFENVFVMTVYTPNSRRGLERIDYRMQWEEALLSYILELDQKKPVILCGDLNVAHQEIDLKNPKANRNNAGFSDQEREAFTRFLEAGFVDSFRHVYPDLEGAYSWWSYRAGARDRNIGWRIDYFVVSESLKEQIEDASISADVMGSDHCPVELIINI.

Glu36 provides a ligand contact to Mg(2+). The active site involves Tyr106. Mg(2+)-binding residues include Asp145, Asn147, and Asp242. The active-site Proton donor/acceptor is the Asp145.

This sequence belongs to the DNA repair enzymes AP/ExoA family. Mg(2+) serves as cofactor. It depends on Mn(2+) as a cofactor.

Its subcellular location is the cytoplasm. It carries out the reaction Exonucleolytic cleavage in the 3'- to 5'-direction to yield nucleoside 5'-phosphates.. This chain is Exodeoxyribonuclease (exoA), found in Bacillus subtilis (strain 168).